A 194-amino-acid chain; its full sequence is Potassium-transporting ATPase KdpC subunit (194 aa).

A helical transmembrane segment spans residues Leu12 to Phe34.

The protein belongs to the KdpC family. In terms of assembly, the system is composed of three essential subunits: KdpA, KdpB and KdpC.

It localises to the cell inner membrane. Its function is as follows. Part of the high-affinity ATP-driven potassium transport (or Kdp) system, which catalyzes the hydrolysis of ATP coupled with the electrogenic transport of potassium into the cytoplasm. This subunit acts as a catalytic chaperone that increases the ATP-binding affinity of the ATP-hydrolyzing subunit KdpB by the formation of a transient KdpB/KdpC/ATP ternary complex. This Salmonella schwarzengrund (strain CVM19633) protein is Potassium-transporting ATPase KdpC subunit.